The primary structure comprises 125 residues: MPTINQLVRKPRVSEVVKSKSPALENCPQRRGVCTRVYTTTPKKPNSALRKVAKVRLTNGFEVISYIGGEGHNLQEHSVVLIRGGRVKDLPGVRYHIVRGSLDLQGVKDRKQARSKYGAKRPKAA.

Aspartate 89 carries the post-translational modification 3-methylthioaspartic acid.

The protein belongs to the universal ribosomal protein uS12 family. As to quaternary structure, part of the 30S ribosomal subunit. Contacts proteins S8 and S17. May interact with IF1 in the 30S initiation complex.

Its function is as follows. With S4 and S5 plays an important role in translational accuracy. Functionally, interacts with and stabilizes bases of the 16S rRNA that are involved in tRNA selection in the A site and with the mRNA backbone. Located at the interface of the 30S and 50S subunits, it traverses the body of the 30S subunit contacting proteins on the other side and probably holding the rRNA structure together. The combined cluster of proteins S8, S12 and S17 appears to hold together the shoulder and platform of the 30S subunit. This chain is Small ribosomal subunit protein uS12, found in Cupriavidus necator (strain ATCC 17699 / DSM 428 / KCTC 22496 / NCIMB 10442 / H16 / Stanier 337) (Ralstonia eutropha).